The sequence spans 1623 residues: ATP-binding cassette sub-family A member 9 (1623 aa).

A helical transmembrane segment spans residues 31-51 (LLEWLFSLLLILFVYQLSSNL). A glycan (N-linked (GlcNAc...) asparagine) is linked at Asn-120. Helical transmembrane passes span 225-245 (FFIFFCVISFSSLIYYLSVNI), 265-285 (AFWLSWSLMYAGFILVVAVLM), 295-315 (VVLTGFMVVFLLFLFYGLSLI), 329-349 (FLTGLAIFILTVFWGSLGFTA), 354-374 (LPAFVEWTLCFLSPFAFTTGM), and 398-418 (LIMATLFMLVLDALLYLVLAL). In terms of domain architecture, ABC transporter 1 spans 481–716 (IRIKNLKKEY…WGIGYHLSLH (236 aa)). Position 517-524 (517-524 (GHSGAGKT)) interacts with ATP. 7 helical membrane-spanning segments follow: residues 863 to 883 (LMTVLLLFGISFVPQLLEHLV), 1025 to 1045 (AFFWIPVAASLTPYIAMGSIS), 1071 to 1091 (LVDIPIYFLILFLMQIMDSVF), 1107 to 1127 (IPCSIGYASSLIFMTYVISFI), 1135 to 1155 (SGIWSFFFLIVTIFFIIATDI), 1163 to 1183 (LLICTFLVPPFTLIGSLLIFS), and 1199 to 1219 (QLVFLALLIPYLHFLLFFFIL). The ABC transporter 2 domain maps to 1287-1520 (LRKEYIGRTK…FGKDYLLEMK (234 aa)). Residue 1325-1332 (GHNGAGKS) coordinates ATP.

Belongs to the ABC transporter superfamily. ABCA family. In terms of tissue distribution, highly expressed in heart and to lower extent in kidney, brain and spleen. Weakly expressed in developing and adult brains. Weakly expressed in the cerebellar granular layer at P14 and P21.

It localises to the membrane. Its function is as follows. Transporter that may play a role in monocyte differentiation and lipid transport and homeostasis. In Mus musculus (Mouse), this protein is ATP-binding cassette sub-family A member 9 (Abca9).